Here is a 168-residue protein sequence, read N- to C-terminus: Peptidyl-prolyl cis-trans isomerase-like 3 (168 aa).

The region spanning Met1–Val156 is the PPIase cyclophilin-type domain.

The protein belongs to the cyclophilin-type PPIase family. PPIL3 subfamily.

The catalysed reaction is [protein]-peptidylproline (omega=180) = [protein]-peptidylproline (omega=0). PPIases accelerate the folding of proteins. It catalyzes the cis-trans isomerization of proline imidic peptide bonds in oligopeptides. The sequence is that of Peptidyl-prolyl cis-trans isomerase-like 3 (CYP10) from Mycosarcoma maydis (Corn smut fungus).